A 212-amino-acid chain; its full sequence is Elongation factor Ts (212 aa).

Residues 82 to 85 (SDFV) are involved in Mg(2+) ion dislocation from EF-Tu.

This sequence belongs to the EF-Ts family.

The protein localises to the cytoplasm. Associates with the EF-Tu.GDP complex and induces the exchange of GDP to GTP. It remains bound to the aminoacyl-tRNA.EF-Tu.GTP complex up to the GTP hydrolysis stage on the ribosome. The sequence is that of Elongation factor Ts from Solibacter usitatus (strain Ellin6076).